The chain runs to 321 residues: MANIVNFPIIDMEKLNNYNGVERSLVLDQIKDACHNWGFFQVVNHSLSHELMDKVERMTKEHYKKFREQKFKDMVQTKGLVSAESQVNDIDWESTFYLRHRPTSNISEVPDLDDQYRKLMKEFAAQIERLSEQLLDLLCENLGLEKAYLKNAFYGANGPTFGTKVSNYPPCPKPDLIKGLRAHTDAGGIILLFQDDKVSGLQLLKDGHWVDVPPMKHSIVVNLGDQLEVITNGKYKSVMHRVIAQTDGNRMSIASFYNPGSDAVIYPAPTLVEKEEEKCRAYPKFVFEDYMNLYLKLKFQEKEPRFEAMKAMETTGPIPTA.

In terms of domain architecture, Fe2OG dioxygenase spans proline 159–proline 259. Fe cation contacts are provided by histidine 183, aspartate 185, and histidine 240.

Belongs to the iron/ascorbate-dependent oxidoreductase family. Fe cation serves as cofactor.

It carries out the reaction 1-aminocyclopropane-1-carboxylate + L-ascorbate + O2 = ethene + L-dehydroascorbate + hydrogen cyanide + CO2 + 2 H2O. It participates in alkene biosynthesis; ethylene biosynthesis via S-adenosyl-L-methionine; ethylene from S-adenosyl-L-methionine: step 2/2. The chain is Probable 1-aminocyclopropane-1-carboxylate oxidase (ACO) from Dianthus caryophyllus (Carnation).